The chain runs to 310 residues: Aspartate carbamoyltransferase catalytic subunit (310 aa).

Residues Arg-55 and Thr-56 each contribute to the carbamoyl phosphate site. Lys-85 is an L-aspartate binding site. 3 residues coordinate carbamoyl phosphate: Arg-106, His-135, and Gln-138. Residues Arg-168 and Arg-230 each contribute to the L-aspartate site. 2 residues coordinate carbamoyl phosphate: Leu-268 and Pro-269.

The protein belongs to the aspartate/ornithine carbamoyltransferase superfamily. ATCase family. As to quaternary structure, heterododecamer (2C3:3R2) of six catalytic PyrB chains organized as two trimers (C3), and six regulatory PyrI chains organized as three dimers (R2).

It catalyses the reaction carbamoyl phosphate + L-aspartate = N-carbamoyl-L-aspartate + phosphate + H(+). It participates in pyrimidine metabolism; UMP biosynthesis via de novo pathway; (S)-dihydroorotate from bicarbonate: step 2/3. Its function is as follows. Catalyzes the condensation of carbamoyl phosphate and aspartate to form carbamoyl aspartate and inorganic phosphate, the committed step in the de novo pyrimidine nucleotide biosynthesis pathway. This chain is Aspartate carbamoyltransferase catalytic subunit, found in Buchnera aphidicola subsp. Acyrthosiphon pisum (strain 5A).